Here is a 331-residue protein sequence, read N- to C-terminus: Very-long-chain 3-oxoacyl-CoA reductase (331 aa).

Residues 15–35 (VQWALAGVGALYISAKVLSYL) form a helical membrane-spanning segment. 8 residues coordinate NADP(+): Val60, Asp115, Asp123, Asn142, Tyr209, Lys213, Ile242, and Ser244. Tyr209 serves as the catalytic Proton donor. Catalysis depends on Lys213, which acts as the Lowers pKa of active site Tyr.

It belongs to the short-chain dehydrogenases/reductases (SDR) family.

The protein resides in the endoplasmic reticulum membrane. The catalysed reaction is a very-long-chain (3R)-3-hydroxyacyl-CoA + NADP(+) = a very-long-chain 3-oxoacyl-CoA + NADPH + H(+). The protein operates within lipid metabolism; fatty acid biosynthesis. Functionally, component of the microsomal membrane bound fatty acid elongation system, which produces the 26-carbon very long-chain fatty acids (VLCFA) from palmitate. Catalyzes the reduction of the 3-ketoacyl-CoA intermediate that is formed in each cycle of fatty acid elongation. VLCFAs serve as precursors for ceramide and sphingolipids. In Pyricularia oryzae (strain 70-15 / ATCC MYA-4617 / FGSC 8958) (Rice blast fungus), this protein is Very-long-chain 3-oxoacyl-CoA reductase.